The sequence spans 108 residues: Iron-sulfur cluster assembly protein CyaY (108 aa).

This sequence belongs to the frataxin family.

Functionally, involved in iron-sulfur (Fe-S) cluster assembly. May act as a regulator of Fe-S biogenesis. The sequence is that of Iron-sulfur cluster assembly protein CyaY from Burkholderia cenocepacia (strain ATCC BAA-245 / DSM 16553 / LMG 16656 / NCTC 13227 / J2315 / CF5610) (Burkholderia cepacia (strain J2315)).